The chain runs to 210 residues: Small ribosomal subunit protein uS3 (210 aa).

The 70-residue stretch at 17–86 (IDEFLEKELR…NPQIDVQEIK (70 aa)) folds into the KH type-2 domain.

It belongs to the universal ribosomal protein uS3 family. In terms of assembly, part of the 30S ribosomal subunit.

Its function is as follows. Binds the lower part of the 30S subunit head. In Pyrococcus horikoshii (strain ATCC 700860 / DSM 12428 / JCM 9974 / NBRC 100139 / OT-3), this protein is Small ribosomal subunit protein uS3.